A 735-amino-acid chain; its full sequence is DNA ligase 1 (735 aa).

Positions 1 to 11 (MAGDKQGDKQA) are enriched in basic and acidic residues. A disordered region spans residues 1–23 (MAGDKQGDKQAETTSVPAEARER). NAD(+) is bound by residues 48–52 (DAEFD), 97–98 (SL), and glutamate 128. Lysine 130 (N6-AMP-lysine intermediate) is an active-site residue. NAD(+) contacts are provided by arginine 151, glutamate 188, lysine 305, and lysine 329. Residues cysteine 423, cysteine 426, cysteine 442, and cysteine 448 each contribute to the Zn(2+) site. Residues 643–732 (EGPRPLEGLT…PEAAADVALS (90 aa)) enclose the BRCT domain.

Belongs to the NAD-dependent DNA ligase family. LigA subfamily. It depends on Mg(2+) as a cofactor. The cofactor is Mn(2+).

It carries out the reaction NAD(+) + (deoxyribonucleotide)n-3'-hydroxyl + 5'-phospho-(deoxyribonucleotide)m = (deoxyribonucleotide)n+m + AMP + beta-nicotinamide D-nucleotide.. Functionally, DNA ligase that catalyzes the formation of phosphodiester linkages between 5'-phosphoryl and 3'-hydroxyl groups in double-stranded DNA using NAD as a coenzyme and as the energy source for the reaction. It is essential for DNA replication and repair of damaged DNA. In Streptomyces coelicolor (strain ATCC BAA-471 / A3(2) / M145), this protein is DNA ligase 1.